A 305-amino-acid chain; its full sequence is Dioxygenase hkm4 (305 aa).

Positions 140, 142, and 216 each coordinate Fe cation.

The protein belongs to the PhyH family. Requires Fe cation as cofactor.

It functions in the pathway secondary metabolite biosynthesis. Functionally, dioxygenase; part of the gene cluster that mediates the biosynthesis of hancockiamides, an unusual new family of N-cinnamoylated piperazines. The NRPS hkm10 and the NmrA-like reductase hkm9 are proposed to convert two molecules of L-Phe to the intermediary piperazine called xenocockiamide A. Xenocockiamide A is then converted to hancockiamide D via a series of hydroxylations and O-methylations. The tyrosinase hkm6 may catalyze an aromatic hydroxylation, then the 2-oxoglutarate-dependent Fe(II) dioxygenase hkm4 and the FAD-dependent phenol hydroxylase hkm7 may catalyze consecutive hydroxylations to install 2 more hydroxy groups, and the methyltransferase hkm8 probably catalyzes two methylations using 2 molecules of S-adenosyl-L-methionine (SAM). The NRPS hkm11 activates and transfers trans-cinnamate supplied by the PAL hkm12 to hancockiamide D and produces hancockiamide A. NRPS Hkm11 has the flexibility to tolerate the bulky hancockiamide G as a substrate and the absence of the acetyl-transferase hkm3 opens up the opportunity for hkm11 to introduce a second N-cinnamoyl moiety. The cytochrome P450 monooxygenase hkm5 catalyzes the methylenedioxy bridge formation, converting hancockiamide A into hancockiamide G. Hkm5 can also convert hancockiamide B into hancockiamide C, and hancockiamide D into hancockiamide H. The N-acetyltransferase hkm3 finally transfers an acetyl group to 1-N of piperazine, converting hancockiamide A into hancockiamide B and hancockiamide G into hancockiamide C. The polypeptide is Dioxygenase hkm4 (Aspergillus hancockii).